We begin with the raw amino-acid sequence, 91 residues long: Probable Fe(2+)-trafficking protein (91 aa).

This sequence belongs to the Fe(2+)-trafficking protein family.

In terms of biological role, could be a mediator in iron transactions between iron acquisition and iron-requiring processes, such as synthesis and/or repair of Fe-S clusters in biosynthetic enzymes. In Thiobacillus denitrificans (strain ATCC 25259 / T1), this protein is Probable Fe(2+)-trafficking protein.